Consider the following 317-residue polypeptide: UAP56-interacting factor (317 aa).

The residue at position 1 (M1) is an N-acetylmethionine. Residues M1–S23 form a disordered region. Position 14 is a phosphothreonine (T14). S23 is modified (phosphoserine). The short motif at N26–E44 is the UAP56-binding motif element. A phosphoserine mark is found at S60 and S117. K139 is covalently cross-linked (Glycyl lysine isopeptide (Lys-Gly) (interchain with G-Cter in SUMO1)). K260 participates in a covalent cross-link: Glycyl lysine isopeptide (Lys-Gly) (interchain with G-Cter in SUMO2).

It belongs to the UIF family. Interacts with DDX39B/UAP56 and NXF1; interaction with DDX39B/UAP56 and NXF1 are mutually exclusive. Interacts with SSRP1; required for its recruitment to mRNAs. Interacts with CHTOP.

It is found in the nucleus. Its subcellular location is the nucleoplasm. The protein localises to the nucleus speckle. Its function is as follows. Required for mRNA export from the nucleus to the cytoplasm. Acts as an adapter that uses the DDX39B/UAP56-NFX1 pathway to ensure efficient mRNA export and delivering to the nuclear pore. Associates with spliced and unspliced mRNAs simultaneously with ALYREF/THOC4. The polypeptide is UAP56-interacting factor (Fyttd1) (Rattus norvegicus (Rat)).